A 186-amino-acid polypeptide reads, in one-letter code: ATP synthase subunit delta (186 aa).

It belongs to the ATPase delta chain family. F-type ATPases have 2 components, F(1) - the catalytic core - and F(0) - the membrane proton channel. F(1) has five subunits: alpha(3), beta(3), gamma(1), delta(1), epsilon(1). F(0) has three main subunits: a(1), b(2) and c(10-14). The alpha and beta chains form an alternating ring which encloses part of the gamma chain. F(1) is attached to F(0) by a central stalk formed by the gamma and epsilon chains, while a peripheral stalk is formed by the delta and b chains.

Its subcellular location is the cell inner membrane. Its function is as follows. F(1)F(0) ATP synthase produces ATP from ADP in the presence of a proton or sodium gradient. F-type ATPases consist of two structural domains, F(1) containing the extramembraneous catalytic core and F(0) containing the membrane proton channel, linked together by a central stalk and a peripheral stalk. During catalysis, ATP synthesis in the catalytic domain of F(1) is coupled via a rotary mechanism of the central stalk subunits to proton translocation. In terms of biological role, this protein is part of the stalk that links CF(0) to CF(1). It either transmits conformational changes from CF(0) to CF(1) or is implicated in proton conduction. The protein is ATP synthase subunit delta of Leptospira borgpetersenii serovar Hardjo-bovis (strain JB197).